The chain runs to 376 residues: Phytanoyl-CoA hydroxylase interacting protein-like (376 aa).

S12 and S15 each carry phosphoserine. N23 carries N-linked (GlcNAc...) asparagine glycosylation. A Phosphoserine modification is found at S25. Residue N37 is glycosylated (N-linked (GlcNAc...) asparagine). Residues 52-161 (VPRNIKISNI…EIIEFCTADY (110 aa)) enclose the Fibronectin type-III domain.

It belongs to the PHYHIP family.

Functionally, may play a role in the development of the central system. This chain is Phytanoyl-CoA hydroxylase interacting protein-like (PHYHIPL), found in Bos taurus (Bovine).